A 672-amino-acid chain; its full sequence is Transcription factor tau 91 kDa subunit (672 aa).

A required for DNA-binding region spans residues 1-158 (MAVIPAKKRG…SLGQKGRPIR (158 aa)). The segment at residues 6 to 18 (AKKRGRPRKSVVA) is a DNA-binding region (a.T hook). Disordered regions lie at residues 24–45 (SLAS…ASKK) and 67–156 (VNNV…KGRP). Residues 71 to 100 (DDTDDDDFVLNDEGDGEESDNVEIEFENEL) are compositionally biased toward acidic residues. A sufficient for interaction with TFC8 region spans residues 159–672 (LLKDLSSARD…AGLLTLEYLS (514 aa)). A disulfide bridge links Cys375 with Cys383.

In terms of assembly, heterodimer with TFC8. Component of the TFIIIC complex composed of TFC1, TFC3, TFC4, TFC6, TFC7 and TFC8. The subunits are organized in two globular domains, tauA and tauB, connected by a proteolysis-sensitive and flexible linker. Interacts with TFC1, TFC3, TFC4 and directly with TFC8.

The protein localises to the nucleus. Functionally, TFIIIC mediates tRNA and 5S RNA gene activation by binding to intragenic promoter elements. Upstream of the transcription start site, TFIIIC assembles the initiation complex TFIIIB-TFIIIC-tDNA, which is sufficient for RNA polymerase III recruitment and function. Part of the tauB domain of TFIIIC that binds boxB DNA promoter sites of tRNA and similar genes. Cooperates with TFC3 in DNA binding. The protein is Transcription factor tau 91 kDa subunit (TFC6) of Saccharomyces cerevisiae (strain ATCC 204508 / S288c) (Baker's yeast).